Reading from the N-terminus, the 629-residue chain is Chaperone protein HtpG (629 aa).

Residues 1–336 (MSSTENNGTA…TEDLSLNVSR (336 aa)) form an a; substrate-binding region. Residues 337–549 (EMVQSSPVMA…KDAIDSQLER (213 aa)) form a b region. A c region spans residues 550–629 (MMKMMNTPMP…ELIEAATLTR (80 aa)).

Belongs to the heat shock protein 90 family. As to quaternary structure, homodimer.

The protein resides in the cytoplasm. Its function is as follows. Molecular chaperone. Has ATPase activity. In Chlorobium chlorochromatii (strain CaD3), this protein is Chaperone protein HtpG.